We begin with the raw amino-acid sequence, 255 residues long: Glutamate racemase (255 aa).

Substrate contacts are provided by residues 7-8 (DS) and 39-40 (YG). Catalysis depends on Cys70, which acts as the Proton donor/acceptor. 71-72 (NT) serves as a coordination point for substrate. Catalysis depends on Cys181, which acts as the Proton donor/acceptor. 182–183 (TH) serves as a coordination point for substrate.

This sequence belongs to the aspartate/glutamate racemases family.

It carries out the reaction L-glutamate = D-glutamate. The protein operates within cell wall biogenesis; peptidoglycan biosynthesis. Its function is as follows. Provides the (R)-glutamate required for cell wall biosynthesis. The chain is Glutamate racemase from Helicobacter pylori (strain ATCC 700392 / 26695) (Campylobacter pylori).